Consider the following 594-residue polypeptide: UvrABC system protein C (594 aa).

The GIY-YIG domain maps to 14–91; it reads DQPGCYLMKD…IKKHDPKYNI (78 aa). A UVR domain is found at 196 to 231; that stretch reads KEVRSELETKMYEASEKLEFERAKELRDQIAHIDAI.

This sequence belongs to the UvrC family. As to quaternary structure, interacts with UvrB in an incision complex.

Its subcellular location is the cytoplasm. Functionally, the UvrABC repair system catalyzes the recognition and processing of DNA lesions. UvrC both incises the 5' and 3' sides of the lesion. The N-terminal half is responsible for the 3' incision and the C-terminal half is responsible for the 5' incision. The sequence is that of UvrABC system protein C from Bacillus cereus (strain Q1).